A 96-amino-acid chain; its full sequence is Auxin-responsive protein SAUR29 (96 aa).

This sequence belongs to the ARG7 family.

It is found in the cell membrane. Functions as a positive effector of cell expansion through modulation of auxin transport. Involved in thermo-responsiveness of plant architecture. Enhances plasma membrane H(+)-ATPase. The sequence is that of Auxin-responsive protein SAUR29 from Arabidopsis thaliana (Mouse-ear cress).